The primary structure comprises 308 residues: tRNA dimethylallyltransferase (308 aa).

16-23 (GPTASGKT) contacts ATP. A substrate-binding site is contributed by 18–23 (TASGKT). Residues 41–44 (DSQQ) are interaction with substrate tRNA.

This sequence belongs to the IPP transferase family. In terms of assembly, monomer. Requires Mg(2+) as cofactor.

It carries out the reaction adenosine(37) in tRNA + dimethylallyl diphosphate = N(6)-dimethylallyladenosine(37) in tRNA + diphosphate. Functionally, catalyzes the transfer of a dimethylallyl group onto the adenine at position 37 in tRNAs that read codons beginning with uridine, leading to the formation of N6-(dimethylallyl)adenosine (i(6)A). The polypeptide is tRNA dimethylallyltransferase (Myxococcus xanthus (strain DK1622)).